Here is a 182-residue protein sequence, read N- to C-terminus: Large ribosomal subunit protein uL16 (182 aa).

This sequence belongs to the universal ribosomal protein uL16 family.

The polypeptide is Large ribosomal subunit protein uL16 (Thermococcus gammatolerans (strain DSM 15229 / JCM 11827 / EJ3)).